A 314-amino-acid chain; its full sequence is Ferrochelatase (314 aa).

Fe cation is bound by residues His184 and Glu259.

The protein belongs to the ferrochelatase family.

It is found in the cytoplasm. It carries out the reaction heme b + 2 H(+) = protoporphyrin IX + Fe(2+). It functions in the pathway porphyrin-containing compound metabolism; protoheme biosynthesis; protoheme from protoporphyrin-IX: step 1/1. In terms of biological role, catalyzes the ferrous insertion into protoporphyrin IX. The polypeptide is Ferrochelatase (Chlamydia trachomatis serovar L2 (strain ATCC VR-902B / DSM 19102 / 434/Bu)).